The chain runs to 215 residues: Protein LURP-one-related 16 (215 aa).

G2 carries N-myristoyl glycine lipidation.

It belongs to the LOR family.

Might be related to the phospholipid scramblase and tubby-like superfamily of membrane tethered transcription factors. The sequence is that of Protein LURP-one-related 16 from Arabidopsis thaliana (Mouse-ear cress).